A 142-amino-acid polypeptide reads, in one-letter code: Large ribosomal subunit protein uL11 (142 aa).

Belongs to the universal ribosomal protein uL11 family. In terms of assembly, part of the ribosomal stalk of the 50S ribosomal subunit. Interacts with L10 and the large rRNA to form the base of the stalk. L10 forms an elongated spine to which L12 dimers bind in a sequential fashion forming a multimeric L10(L12)X complex. One or more lysine residues are methylated.

Forms part of the ribosomal stalk which helps the ribosome interact with GTP-bound translation factors. The protein is Large ribosomal subunit protein uL11 of Desulforudis audaxviator (strain MP104C).